A 363-amino-acid polypeptide reads, in one-letter code: Peptide chain release factor 1 (363 aa).

Q237 is subject to N5-methylglutamine. Residues 287–299 (EQHKEQASTRKEL) show a composition bias toward basic and acidic residues. A disordered region spans residues 287 to 306 (EQHKEQASTRKELIGSGDRS).

This sequence belongs to the prokaryotic/mitochondrial release factor family. Methylated by PrmC. Methylation increases the termination efficiency of RF1.

Its subcellular location is the cytoplasm. Functionally, peptide chain release factor 1 directs the termination of translation in response to the peptide chain termination codons UAG and UAA. This chain is Peptide chain release factor 1, found in Ruthia magnifica subsp. Calyptogena magnifica.